The following is a 297-amino-acid chain: Iron/alpha-ketoglutarate-dependent dioxygenase ausU (297 aa).

Fe cation is bound by residues His-130, Asp-132, and His-206.

This sequence belongs to the PhyH family. Homodimer. Fe cation serves as cofactor.

The protein operates within secondary metabolite biosynthesis; terpenoid biosynthesis. Iron/alpha-ketoglutarate-dependent dioxygenase; part of the gene cluster that mediates the biosynthesis of calidodehydroaustin, a fungal meroterpenoid. The first step of the pathway is the synthesis of 3,5-dimethylorsellinic acid by the polyketide synthase ausA. 3,5-dimethylorsellinic acid is then prenylated by the polyprenyl transferase ausN. Further epoxidation by the FAD-dependent monooxygenase ausM and cyclization by the probable terpene cyclase ausL lead to the formation of protoaustinoid A. Protoaustinoid A is then oxidized to spiro-lactone preaustinoid A3 by the combined action of the FAD-binding monooxygenases ausB and ausC, and the dioxygenase ausE. Acid-catalyzed keto-rearrangement and ring contraction of the tetraketide portion of preaustinoid A3 by ausJ lead to the formation of preaustinoid A4. The aldo-keto reductase ausK, with the help of ausH, is involved in the next step by transforming preaustinoid A4 into isoaustinone which is in turn hydroxylated by the P450 monooxygenase ausI to form austinolide. The cytochrome P450 monooxygenase ausG modifies austinolide to austinol. Austinol is further acetylated to austin by the O-acetyltransferase ausP, which spontaneously changes to dehydroaustin. The cytochrome P450 monooxygenase ausR then converts dehydroaustin is into 7-dehydrodehydroaustin. The hydroxylation catalyzed by ausR permits the O-acetyltransferase ausQ to add an additional acetyl group to the molecule, leading to the formation of acetoxydehydroaustin. The short chain dehydrogenase ausT catalyzes the reduction of the double bond present between carbon atoms 1 and 2 to convert 7-dehydrodehydroaustin into 1,2-dihydro-7-hydroxydehydroaustin. AusQ catalyzes not only an acetylation reaction but also the addition of the PKS ausV diketide product to 1,2-dihydro-7-hydroxydehydroaustin, forming precalidodehydroaustin. Finally, the iron/alpha-ketoglutarate-dependent dioxygenase converts precalidodehydroaustin into calidodehydroaustin. The polypeptide is Iron/alpha-ketoglutarate-dependent dioxygenase ausU (Aspergillus calidoustus).